The following is a 506-amino-acid chain: Nostrin (506 aa).

The F-BAR domain maps to methionine 1–aspartate 260. At serine 114 the chain carries Phosphoserine. Coiled coils occupy residues serine 160–tyrosine 230 and lysine 305–serine 334. One can recognise an REM-1 domain in the interval proline 292–aspartate 372. Residues lysine 413 to valine 435 form a disordered region. Positions proline 419–valine 435 are enriched in low complexity. The SH3 domain occupies alanine 438–proline 497. At serine 479 the chain carries Phosphoserine.

Homotrimer. Interacts with NOS3, DNM2, WASL and CAV1. Interacts with DAB2. Interacts (via SH3 domain) with DNM2; this interaction allows the recruitment of NOS3 to dynamin-positive structures.

The protein localises to the cell membrane. It localises to the cytoplasmic vesicle. The protein resides in the cytoplasm. Its subcellular location is the cytoskeleton. It is found in the nucleus. In terms of biological role, multivalent adapter protein which may decrease NOS3 activity by inducing its translocation away from the plasma membrane. The sequence is that of Nostrin from Mus musculus (Mouse).